The following is an 87-amino-acid chain: Protein Isd11 (87 aa).

The protein belongs to the complex I LYR family. In terms of assembly, interacts with IscS; the interaction enhances cysteine desulfurase activity of IscS. Component of a complex, at least composed of IscS, Isd11 and IscU.

The protein resides in the mitochondrion. Its pathway is cofactor biosynthesis; iron-sulfur cluster biosynthesis. Its function is as follows. Participates in iron-sulfur cluster formation (ISC) pathway for iron-sulfur (Fe-S) cluster biogenesis. Enhances cysteine desulfurase activity of IscS. In Plasmodium falciparum (isolate 3D7), this protein is Protein Isd11.